A 197-amino-acid polypeptide reads, in one-letter code: MKIKSSEFIISAVKREQYPDDNLPEIAFVGRSNVGKSSIINSLTNRRGLAKVSQTPGKTRLINFFLLNKDFYLVDLPGYGYAKVSKKEKASWGATIERYLLNRGPLKKVVLLVDCRHKPTADDVQMYEWIKHYGYEVVVIATKSDKISNNQIGKSEKLIKETLGLPKDHKLKFFSSLNKKGKDELVDYLFDDLVEEV.

An EngB-type G domain is found at 22 to 195 (NLPEIAFVGR…VDYLFDDLVE (174 aa)). Residues 30–37 (GRSNVGKS), 57–61 (GKTRL), 75–78 (DLPG), 142–145 (TKSD), and 174–176 (FSS) contribute to the GTP site. The Mg(2+) site is built by Ser-37 and Thr-59.

This sequence belongs to the TRAFAC class TrmE-Era-EngA-EngB-Septin-like GTPase superfamily. EngB GTPase family. It depends on Mg(2+) as a cofactor.

Its function is as follows. Necessary for normal cell division and for the maintenance of normal septation. The polypeptide is Probable GTP-binding protein EngB (Clostridium perfringens (strain 13 / Type A)).